We begin with the raw amino-acid sequence, 357 residues long: Ribosomal RNA large subunit methyltransferase M (357 aa).

S-adenosyl-L-methionine is bound by residues Ser183, 216–219 (APGG), Asp235, Asp255, and Asp271. Catalysis depends on Lys300, which acts as the Proton acceptor.

Belongs to the class I-like SAM-binding methyltransferase superfamily. RNA methyltransferase RlmE family. RlmM subfamily. Monomer.

It is found in the cytoplasm. The enzyme catalyses cytidine(2498) in 23S rRNA + S-adenosyl-L-methionine = 2'-O-methylcytidine(2498) in 23S rRNA + S-adenosyl-L-homocysteine + H(+). Catalyzes the 2'-O-methylation at nucleotide C2498 in 23S rRNA. The chain is Ribosomal RNA large subunit methyltransferase M from Pseudomonas syringae pv. syringae (strain B728a).